The sequence spans 670 residues: E3 ubiquitin-protein ligase TRAF7 (670 aa).

Disordered regions lie at residues 1-37 (MSSG…FGPA) and 49-97 (GTST…SLHS). Polar residues-rich tracts occupy residues 15–31 (GPSN…TRME) and 49–67 (GTST…STLA). Phosphoserine is present on residues Ser61, Ser88, and Ser91. The RING-type zinc-finger motif lies at 131–165 (CQLCCSVFKDPVITTCGHTFCRRCALKSEKCPVDN). The TRAF-type zinc-finger motif lies at 222–276 (HEGSCDYRPVRCPNNPSCPPLLRMNLEAHLKECEHIKCPHSKYGCTFIGNQDTYE). 7 WD repeats span residues 394–433 (GHQG…KCQK), 437–474 (GHDG…KVNT), 477–513 (AHDN…LKLK), 515–554 (ELTG…CIHV), 557–594 (TSGG…QVRT), 597–638 (GHVG…CTQT), and 641–669 (RHQG…KVWT).

The protein belongs to the WD repeat TRAF7 family. As to quaternary structure, homodimer. Interacts with MAP3K3 and promotes the kinase activity of this enzyme. In terms of processing, phosphorylated by MAP3K3. Post-translationally, ubiquitinates itself upon phosphorylation. In terms of tissue distribution, ubiquitously expressed with high levels in skeletal muscle, heart, colon, spleen, kidney, liver and placenta.

Its subcellular location is the cytoplasmic vesicle. It localises to the cytoplasm. The protein resides in the nucleus. The enzyme catalyses S-ubiquitinyl-[E2 ubiquitin-conjugating enzyme]-L-cysteine + [acceptor protein]-L-lysine = [E2 ubiquitin-conjugating enzyme]-L-cysteine + N(6)-ubiquitinyl-[acceptor protein]-L-lysine.. Its pathway is protein modification; protein ubiquitination. E3 ubiquitin and SUMO-protein ligase that plays a role in different biological processes such as innate immunity, inflammation or apoptosis. Potentiates MAP3K3-mediated activation of JUN/AP1 and DDIT3 transcriptional regulators. Negatively regulates MYB transcriptional activity by sequestering it to the cytosol via SUMOylation. Plays a role in the phosphorylation of MAPK1 and/or MAPK3, probably via its interaction with MAP3K3. Negatively regulates RLR-mediated innate immunity by promoting 'Lys-48'-linked ubiquitination of TBK1 through its RING domain to inhibit the cellular antiviral response. Promotes 'Lys-29'-linked polyubiquitination of NEMO/IKBKG and RELA leading to targeting these two proteins to lysosomal degradative pathways, reducing the transcriptional activity of NF-kappa-B. This chain is E3 ubiquitin-protein ligase TRAF7 (TRAF7), found in Homo sapiens (Human).